The chain runs to 102 residues: Small ribosomal subunit protein uS10 (102 aa).

Positions 34-61 are disordered; sequence MAGPIPLPTKTLKVTTRKSTDGEGSSSF.

This sequence belongs to the universal ribosomal protein uS10 family. As to quaternary structure, part of the 30S ribosomal subunit.

Involved in the binding of tRNA to the ribosomes. The polypeptide is Small ribosomal subunit protein uS10 (Methanococcus aeolicus (strain ATCC BAA-1280 / DSM 17508 / OCM 812 / Nankai-3)).